Reading from the N-terminus, the 87-residue chain is Mitotic-spindle organizing protein 1 (87 aa).

This sequence belongs to the MOZART1 family. Part of the gamma-tubulin complex.

It localises to the cytoplasm. It is found in the cytoskeleton. The protein localises to the microtubule organizing center. Its subcellular location is the spindle pole body. In terms of biological role, required for gamma-tubulin complex recruitment to the microtubule organizing center (MTOC). The chain is Mitotic-spindle organizing protein 1 from Chaetomium globosum (strain ATCC 6205 / CBS 148.51 / DSM 1962 / NBRC 6347 / NRRL 1970) (Soil fungus).